A 314-amino-acid polypeptide reads, in one-letter code: Dual specificity protein phosphatase 2 (314 aa).

The 122-residue stretch at 23–144 folds into the Rhodanese domain; sequence EAERTLLLDC…FQGCCPDLCS (122 aa). The Tyrosine-protein phosphatase domain occupies 172–313; that stretch reads GPVEILPYLF…LLQFETQVLC (142 aa). Cys-257 functions as the Phosphocysteine intermediate in the catalytic mechanism.

Belongs to the protein-tyrosine phosphatase family. Non-receptor class dual specificity subfamily. Interacts with MAPK14; this interaction does not lead to catalytic activation of DUSP2 and dephosphrylation of MAPK14. In terms of tissue distribution, expressed in hematopoietic tissues.

The protein localises to the nucleus. It catalyses the reaction O-phospho-L-tyrosyl-[protein] + H2O = L-tyrosyl-[protein] + phosphate. The enzyme catalyses O-phospho-L-threonyl-[protein] + H2O = L-threonyl-[protein] + phosphate. In terms of biological role, dephosphorylates both phosphorylated Thr and Tyr residues in MAPK1, and dephosphorylation of phosphotyrosine is slightly faster than that of phosphothreonine. Can dephosphorylate MAPK1. This is Dual specificity protein phosphatase 2 from Homo sapiens (Human).